A 168-amino-acid polypeptide reads, in one-letter code: S-ribosylhomocysteine lyase (168 aa).

H54, H58, and C128 together coordinate Fe cation.

It belongs to the LuxS family. In terms of assembly, homodimer. It depends on Fe cation as a cofactor.

It catalyses the reaction S-(5-deoxy-D-ribos-5-yl)-L-homocysteine = (S)-4,5-dihydroxypentane-2,3-dione + L-homocysteine. Involved in the synthesis of autoinducer 2 (AI-2) which is secreted by bacteria and is used to communicate both the cell density and the metabolic potential of the environment. The regulation of gene expression in response to changes in cell density is called quorum sensing. Catalyzes the transformation of S-ribosylhomocysteine (RHC) to homocysteine (HC) and 4,5-dihydroxy-2,3-pentadione (DPD). This Actinobacillus succinogenes (strain ATCC 55618 / DSM 22257 / CCUG 43843 / 130Z) protein is S-ribosylhomocysteine lyase.